The primary structure comprises 74 residues: Male-specific sperm protein Mst84Db (74 aa).

It belongs to the MST(3)CGP family. As to expression, testis.

This Drosophila melanogaster (Fruit fly) protein is Male-specific sperm protein Mst84Db (Mst84Db).